The following is a 235-amino-acid chain: Ribonuclease 3 (235 aa).

The RNase III domain occupies 6–131 (IDQLERLTEH…LIAVMYLDGG (126 aa)). Glutamate 44 contacts Mg(2+). Aspartate 48 is a catalytic residue. Residues aspartate 117 and glutamate 120 each contribute to the Mg(2+) site. The active site involves glutamate 120. The DRBM domain occupies 156–225 (DAKTELQEWA…AEKVLRREGI (70 aa)).

The protein belongs to the ribonuclease III family. In terms of assembly, homodimer. The cofactor is Mg(2+).

The protein localises to the cytoplasm. It carries out the reaction Endonucleolytic cleavage to 5'-phosphomonoester.. Functionally, digests double-stranded RNA. Involved in the processing of primary rRNA transcript to yield the immediate precursors to the large and small rRNAs (23S and 16S). Processes some mRNAs, and tRNAs when they are encoded in the rRNA operon. Processes pre-crRNA and tracrRNA of type II CRISPR loci if present in the organism. This is Ribonuclease 3 from Bartonella quintana (strain Toulouse) (Rochalimaea quintana).